The sequence spans 636 residues: Chaperone protein HtpG (636 aa).

An a; substrate-binding region spans residues 1–344 (MTLEADKQTH…SADLSLNVSR (344 aa)). The interval 345-561 (EILQSGPVVD…EGDLGLQMRQ (217 aa)) is b. The segment at 562-636 (LLEASGQKVP…LNKLLLELSA (75 aa)) is c.

This sequence belongs to the heat shock protein 90 family. Homodimer.

The protein localises to the cytoplasm. Functionally, molecular chaperone. Has ATPase activity. The sequence is that of Chaperone protein HtpG from Xylella fastidiosa (strain Temecula1 / ATCC 700964).